Consider the following 294-residue polypeptide: MAEISGNGGDARDGAVVVNLKEEDEQQQQQQAIHKPLKKQDSLLSISVPFLQKLMAEVLGTYFLIFAGCAAVAVNTQHDKAVTLPGIAIVWGLTVMVLVYSLGHISGAHFNPAVTIAFASCGRFPLKQVPAYVISQVIGSTLAAATLRLLFGLDQDVCSGKHDVFVGTLPSGSNLQSFVIEFIITFYLMFVISGVATDNRAIGELAGLAVGSTVLLNVIIAGPVSGASMNPGRSLGPAMVYSCYRGLWIYIVSPIVGAVSGAWVYNMVRYTDKPLREITKSGSFLKTVRNGSSR.

Methionine 1 carries the N-acetylmethionine modification. 2 consecutive transmembrane segments (helical) span residues 54 to 74 (LMAEVLGTYFLIFAGCAAVAV) and 82 to 102 (VTLPGIAIVWGLTVMVLVYSL). The NPA 1 signature appears at 111–113 (NPA). 3 helical membrane-spanning segments follow: residues 133–153 (VISQVIGSTLAAATLRLLFGL), 177–197 (SFVIEFIITFYLMFVISGVAT), and 201–221 (AIGELAGLAVGSTVLLNVIIA). An NPA 2 motif is present at residues 230–232 (NPG). Residues 248-268 (WIYIVSPIVGAVSGAWVYNMV) form a helical membrane-spanning segment. Serine 283 is modified (phosphoserine).

Belongs to the MIP/aquaporin (TC 1.A.8) family. NIP (TC 1.A.8.12) subfamily. In terms of tissue distribution, expressed in developing seeds.

Its subcellular location is the membrane. Functionally, water channel probably required to promote glycerol permeability and water transport across cell membranes. The protein is Aquaporin NIP1-2 (NIP1-2) of Arabidopsis thaliana (Mouse-ear cress).